Consider the following 374-residue polypeptide: UDP-N-acetylglucosamine--N-acetylmuramyl-(pentapeptide) pyrophosphoryl-undecaprenol N-acetylglucosamine transferase (374 aa).

UDP-N-acetyl-alpha-D-glucosamine-binding positions include threonine 10–glycine 12, asparagine 124, arginine 166, serine 196, and glutamine 294.

The protein belongs to the glycosyltransferase 28 family. MurG subfamily.

It localises to the cell membrane. The enzyme catalyses di-trans,octa-cis-undecaprenyl diphospho-N-acetyl-alpha-D-muramoyl-L-alanyl-D-glutamyl-meso-2,6-diaminopimeloyl-D-alanyl-D-alanine + UDP-N-acetyl-alpha-D-glucosamine = di-trans,octa-cis-undecaprenyl diphospho-[N-acetyl-alpha-D-glucosaminyl-(1-&gt;4)]-N-acetyl-alpha-D-muramoyl-L-alanyl-D-glutamyl-meso-2,6-diaminopimeloyl-D-alanyl-D-alanine + UDP + H(+). Its pathway is cell wall biogenesis; peptidoglycan biosynthesis. In terms of biological role, cell wall formation. Catalyzes the transfer of a GlcNAc subunit on undecaprenyl-pyrophosphoryl-MurNAc-pentapeptide (lipid intermediate I) to form undecaprenyl-pyrophosphoryl-MurNAc-(pentapeptide)GlcNAc (lipid intermediate II). The chain is UDP-N-acetylglucosamine--N-acetylmuramyl-(pentapeptide) pyrophosphoryl-undecaprenol N-acetylglucosamine transferase from Symbiobacterium thermophilum (strain DSM 24528 / JCM 14929 / IAM 14863 / T).